The primary structure comprises 111 residues: Large ribosomal subunit protein uL22 (111 aa).

This sequence belongs to the universal ribosomal protein uL22 family. In terms of assembly, part of the 50S ribosomal subunit.

This protein binds specifically to 23S rRNA; its binding is stimulated by other ribosomal proteins, e.g. L4, L17, and L20. It is important during the early stages of 50S assembly. It makes multiple contacts with different domains of the 23S rRNA in the assembled 50S subunit and ribosome. Functionally, the globular domain of the protein is located near the polypeptide exit tunnel on the outside of the subunit, while an extended beta-hairpin is found that lines the wall of the exit tunnel in the center of the 70S ribosome. This Clostridium tetani (strain Massachusetts / E88) protein is Large ribosomal subunit protein uL22.